The following is a 623-amino-acid chain: Bifunctional methionine biosynthesis protein MetXA/MetW (623 aa).

Polar residues predominate over residues 1–17 (MTSGRSTRVTMFESQAS). The segment at 1-30 (MTSGRSTRVTMFESQASMGEPSNEDLSSTD) is disordered. Positions 77–385 (NAVLVCHAVS…TTNAGHDAFL (309 aa)) constitute an AB hydrolase-1 domain. The Nucleophile role is filled by S183. R253 is a binding site for substrate. Active-site residues include D348 and H381. D382 contributes to the substrate binding site. The segment at 417 to 619 (NVDEESILEI…NADTAVIAFH (203 aa)) is metW.

The protein in the N-terminal section; belongs to the AB hydrolase superfamily. MetX family. This sequence in the C-terminal section; belongs to the MetW family. In terms of assembly, homodimer.

It localises to the cytoplasm. The enzyme catalyses L-homoserine + acetyl-CoA = O-acetyl-L-homoserine + CoA. The protein operates within amino-acid biosynthesis; L-methionine biosynthesis via de novo pathway; O-acetyl-L-homoserine from L-homoserine: step 1/1. In terms of biological role, transfers an acetyl group from acetyl-CoA to L-homoserine, forming acetyl-L-homoserine. In Rhodopirellula baltica (strain DSM 10527 / NCIMB 13988 / SH1), this protein is Bifunctional methionine biosynthesis protein MetXA/MetW.